Here is a 250-residue protein sequence, read N- to C-terminus: Phosphonates import ATP-binding protein PhnC (250 aa).

An ABC transporter domain is found at 2 to 247 (ILFNNVNKVW…KLDAQAMKKI (246 aa)). ATP is bound at residue 35–42 (GLSGAGKT).

Belongs to the ABC transporter superfamily. Phosphonates importer (TC 3.A.1.9.1) family. As to quaternary structure, the complex is composed of two ATP-binding proteins (PhnC), two transmembrane proteins (PhnE) and a solute-binding protein (PhnD).

The protein localises to the cell membrane. It catalyses the reaction phosphonate(out) + ATP + H2O = phosphonate(in) + ADP + phosphate + H(+). Its function is as follows. Part of the ABC transporter complex PhnCDE involved in phosphonates import. Responsible for energy coupling to the transport system. The chain is Phosphonates import ATP-binding protein PhnC from Mycoplasma capricolum subsp. capricolum (strain California kid / ATCC 27343 / NCTC 10154).